The following is a 400-amino-acid chain: MAFLADALSRVKPSATIAVSQKARELKAKGRDVIGLGAGEPDFDTPDNIKKAAIDAIDRGETKYTPVSGIPELREAIAKKFKRENNLDYTAAQTIVGTGGKQILFNAFMATLNPGDEVVIPAPYWVSYPEMVALCGGTPVFVPTRQENNFKLKAEDLDRAITPKTKWFVFNSPSNPSGAAYSHEELKALTDVLMKHPHVWVLTDDMYEHLTYGDFRFATPVEVEPGLYERTLTMNGVSKAYAMTGWRIGYAAGPLHLIKAMDMIQGQQTSGAASIAQWAAVEALNGPQDFIGRNKEIFQGRRDLVVSMLNQAKGISCPTPEGAFYVYPSCAGLIGKTAPSGKVIETDEDFVSELLETEGVAVVHGSAFGLGPNFRISYATSEALLEEACRRIQRFCAACR.

L-aspartate-binding residues include Gly-39, Trp-125, and Asn-175. An N6-(pyridoxal phosphate)lysine modification is found at Lys-239. Arg-375 contacts L-aspartate.

This sequence belongs to the class-I pyridoxal-phosphate-dependent aminotransferase family. As to quaternary structure, homodimer. Requires pyridoxal 5'-phosphate as cofactor.

It localises to the cytoplasm. The catalysed reaction is L-aspartate + 2-oxoglutarate = oxaloacetate + L-glutamate. It carries out the reaction L-arogenate + 2-oxoglutarate = prephenate + L-glutamate. Functionally, catalyzes the reversible conversion of aspartate and 2-oxoglutarate to glutamate and oxaloacetate. Can also transaminate prephenate in the presence of glutamate. Required for symbiotic nitrogen fixation. In Rhizobium meliloti (strain 1021) (Ensifer meliloti), this protein is Aspartate/prephenate aminotransferase.